Reading from the N-terminus, the 496-residue chain is L-arabinose isomerase (496 aa).

Positions 306, 331, 348, and 447 each coordinate Mn(2+).

Belongs to the arabinose isomerase family. It depends on Mn(2+) as a cofactor.

The catalysed reaction is beta-L-arabinopyranose = L-ribulose. It functions in the pathway carbohydrate degradation; L-arabinose degradation via L-ribulose; D-xylulose 5-phosphate from L-arabinose (bacterial route): step 1/3. Its function is as follows. Catalyzes the conversion of L-arabinose to L-ribulose. This chain is L-arabinose isomerase, found in Geobacillus thermodenitrificans (strain NG80-2).